The following is a 424-amino-acid chain: Probable ribonuclease FAU-1 (424 aa).

Belongs to the FAU-1 family.

In terms of biological role, probable RNase involved in rRNA stability through maturation and/or degradation of precursor rRNAs. Binds to RNA in loop regions with AU-rich sequences. The protein is Probable ribonuclease FAU-1 of Saccharolobus islandicus (strain L.S.2.15 / Lassen #1) (Sulfolobus islandicus).